Here is a 123-residue protein sequence, read N- to C-terminus: MPTINQLIASPRVIQKSRKKVPALQQSPQKRGVCTRVYTTTPKKPNSALRKVAKVRLTNGFEVIGYIPGEGHNLQEHSVVMIRGGRVKDLPGVRYHILRGVLDTQGVKNRKQRRSKYGAKRPK.

At aspartate 89 the chain carries 3-methylthioaspartic acid.

This sequence belongs to the universal ribosomal protein uS12 family. Part of the 30S ribosomal subunit. Contacts proteins S8 and S17. May interact with IF1 in the 30S initiation complex.

Its function is as follows. With S4 and S5 plays an important role in translational accuracy. In terms of biological role, interacts with and stabilizes bases of the 16S rRNA that are involved in tRNA selection in the A site and with the mRNA backbone. Located at the interface of the 30S and 50S subunits, it traverses the body of the 30S subunit contacting proteins on the other side and probably holding the rRNA structure together. The combined cluster of proteins S8, S12 and S17 appears to hold together the shoulder and platform of the 30S subunit. The chain is Small ribosomal subunit protein uS12 from Nitrobacter hamburgensis (strain DSM 10229 / NCIMB 13809 / X14).